The chain runs to 149 residues: UPF0179 protein TON_1048 (149 aa).

Belongs to the UPF0179 family.

This is UPF0179 protein TON_1048 from Thermococcus onnurineus (strain NA1).